We begin with the raw amino-acid sequence, 1292 residues long: Zinc finger CCCH domain-containing protein 44 (1292 aa).

The segment covering 1 to 10 (MENQQKQLQQ) has biased composition (polar residues). 2 disordered regions span residues 1–24 (MENQQKQLQQGVPELASLAGREES) and 72–107 (IDEAAPIKRKRGRPPRAQANTPLHIRPPPPPPKKED). The PHD-type zinc-finger motif lies at 110 to 176 (EDVCFICFDG…SYMCYTCTFS (67 aa)). 2 disordered regions span residues 256-313 (PWKE…LKKA) and 401-426 (KGAKTTNGETTHAVPSQIEEDSVHDP). In terms of domain architecture, SWIB/MDM2 spans 313-396 (APGDTSWATK…LKLLESHVLI (84 aa)). A compositionally biased stretch (polar residues) spans 404-414 (KTTNGETTHAV). The Plus3 domain maps to 453–586 (AIDVHNINLI…TAATLQAMRI (134 aa)). Disordered regions lie at residues 624–731 (PEVH…TQGP), 777–832 (TTLP…SNDP), 876–915 (DVRETPGTDQYNTVRADGNHNTTKTLEDETNGGSVSINGS), and 1170–1245 (TTVE…HNNR). Low complexity predominate over residues 661–675 (QNKGVNLNNVGNNVQ). Residues 689–698 (VHADKDDCSK) are compositionally biased toward basic and acidic residues. Residues 699-708 (VHNNSSNIQE) are compositionally biased toward polar residues. A GYF domain is found at 716–770 (SEIWHYRDPTGKTQGPFSMVQLRRWKSSGHFPPYLRIWRAHENQDESVLLTDALA). Residues 813-829 (VNTSATSSSSSTVTAHS) show a composition bias toward low complexity. Composition is skewed to polar residues over residues 882 to 899 (GTDQYNTVRADGNHNTTK) and 906 to 915 (NGGSVSINGS). 2 stretches are compositionally biased toward low complexity: residues 1188 to 1206 (SSEPSPRSLSSHDSSSARG) and 1231 to 1244 (NNGHNSSFNNSHNN). The C3H1-type zinc finger occupies 1267-1292 (PKGLKICKFYESGYCKRGASCSFWHP).

In Arabidopsis thaliana (Mouse-ear cress), this protein is Zinc finger CCCH domain-containing protein 44.